Reading from the N-terminus, the 1560-residue chain is Tenascin-N (1560 aa).

A signal peptide spans 1–26 (MGLWGMLAFPLGFLLASVLLVASAPA). 3 consecutive EGF-like domains span residues 167 to 198 (DQPT…VDCA), 199 to 229 (YAAC…EDCS), and 230 to 260 (EQRC…PDCS). 9 cysteine pairs are disulfide-bonded: cysteine 171–cysteine 181, cysteine 175–cysteine 186, cysteine 188–cysteine 197, cysteine 202–cysteine 212, cysteine 206–cysteine 217, cysteine 219–cysteine 228, cysteine 233–cysteine 243, cysteine 237–cysteine 248, and cysteine 250–cysteine 259. Fibronectin type-III domains lie at 264–353 (APQG…DLAV), 354–444 (VGTA…TEID), 445–532 (GPTN…TEID), 533–622 (SPEN…IDSP), 623–706 (KNLV…APTD), 709–798 (GPKN…IDSP), 799–882 (KNLV…APTD), 885–970 (GPKN…APTD), 973–1062 (SPKN…IDSP), 1063–1144 (KNLV…TKAP), 1149–1238 (SPKN…IDPP), and 1239–1325 (RNLR…VDAR). Disordered regions lie at residues 868 to 888 (GTQE…GPKN) and 1044 to 1063 (GARE…DSPK). The segment covering 1044–1061 (GARESKKANTEGHTDIDS) has biased composition (basic and acidic residues). Residues 1323–1540 (DARFPHPSDC…YVELKIRPFG (218 aa)) enclose the Fibrinogen C-terminal domain. Asparagine 1411 carries N-linked (GlcNAc...) asparagine glycosylation.

The protein belongs to the tenascin family. As to quaternary structure, homohexamer. In terms of tissue distribution, highest expression in kidney followed by spleen and brain. In brain, highest expression is found in hippocampus, cerebellum and olfactory bulb. Expressed in aortic valve, corneal limbus. Expressed in ribs periosteum. During a fracture repair process, expression increases in cells of newly formed perichondrium/peristeum surrounding the cartalaginous callus.

The protein localises to the secreted. The protein resides in the extracellular space. It localises to the extracellular matrix. Extracellular matrix protein that seems to be a ligand for ITGA8:ITGB1, ITGAV:ITGB1 and ITGA4:ITGB1. Involved in neurite outgrowth and cell migration in hippocampal explants. During endochondral bone formation, inhibits proliferation and differentiation of proteoblasts mediated by canonical WNT signaling. In tumors, stimulates angiogenesis by elongation, migration and sprouting of endothelial cells. Expressed in most mammary tumors, may facilitate tumorigenesis by supporting the migratory behavior of breast cancer cells. This Mus musculus (Mouse) protein is Tenascin-N.